The chain runs to 79 residues: HAASPRGRPQQRSSRHGAEGPDTTRRGSCCSSSSSCCRPSTPRHPHNHECKRQLLLLGALLGLPSNTMKYVLVQKKKKK.

The span at 1 to 12 (HAASPRGRPQQR) shows a compositional bias: low complexity. Residues 1–47 (HAASPRGRPQQRSSRHGAEGPDTTRRGSCCSSSSSCCRPSTPRHPHN) form a disordered region. The segment covering 16–25 (HGAEGPDTTR) has biased composition (basic and acidic residues). Residues 28-37 (SCCSSSSSCC) show a composition bias toward low complexity.

Its subcellular location is the membrane. It is found in the cell membrane. The protein resides in the cytoplasmic vesicle. The protein localises to the secretory vesicle. It localises to the rhoptry. This Eimeria acervulina (Coccidian parasite) protein is EAMZP30-47 protein (CMC17).